Here is a 391-residue protein sequence, read N- to C-terminus: Phosphoglycerate kinase (391 aa).

Substrate contacts are provided by residues 21–23 (DLN), Arg36, 59–62 (HLGR), Arg113, and Arg146. Residues Lys197, Glu319, and 345 to 348 (GGDT) contribute to the ATP site.

It belongs to the phosphoglycerate kinase family. As to quaternary structure, monomer.

It localises to the cytoplasm. It catalyses the reaction (2R)-3-phosphoglycerate + ATP = (2R)-3-phospho-glyceroyl phosphate + ADP. The protein operates within carbohydrate degradation; glycolysis; pyruvate from D-glyceraldehyde 3-phosphate: step 2/5. This is Phosphoglycerate kinase from Xanthomonas campestris pv. campestris (strain 8004).